Here is a 1465-residue protein sequence, read N- to C-terminus: DNA polymerase III PolC-type (1465 aa).

The region spanning 427 to 583 (YVVFDVETTG…YDAEATGRLL (157 aa)) is the Exonuclease domain.

Belongs to the DNA polymerase type-C family. PolC subfamily.

It localises to the cytoplasm. It carries out the reaction DNA(n) + a 2'-deoxyribonucleoside 5'-triphosphate = DNA(n+1) + diphosphate. Its function is as follows. Required for replicative DNA synthesis. This DNA polymerase also exhibits 3' to 5' exonuclease activity. In Streptococcus pyogenes serotype M1, this protein is DNA polymerase III PolC-type.